The sequence spans 239 residues: Probable transcriptional regulatory protein Veis_4238 (239 aa).

Positions 1–22 (MAGHSKWANIQHRKGRQDEKRG) are disordered.

This sequence belongs to the TACO1 family.

It is found in the cytoplasm. The polypeptide is Probable transcriptional regulatory protein Veis_4238 (Verminephrobacter eiseniae (strain EF01-2)).